Reading from the N-terminus, the 826-residue chain is U4/U6 snRNA-associated-splicing factor PRP24 (826 aa).

4 consecutive RRM domains span residues threonine 310–glycine 385, isoleucine 386–proline 463, arginine 477–serine 554, and arginine 598–glutamine 670.

It localises to the nucleus. Functionally, functions as a recycling factor of the spliceosome, a machinery that forms on each precursor-messenger RNA (pre-mRNA) and catalyzes the removal of introns. Chaperones the re-annealing of U4 and U6 snRNAs (small nuclear RNAs) released from previous rounds of splicing, an initial step in reforming the U4/U6-U5 tri-snRNP (small nuclear ribonucleoprotein) that can reassemble into another spliceosome complex; this step involves binding U6 and facilitating the unwinding of the U6 internal stem loop, followed by base-pairing of U6 to U4. The polypeptide is U4/U6 snRNA-associated-splicing factor PRP24 (Ophiostoma ulmi (Dutch elm disease fungus)).